Reading from the N-terminus, the 352-residue chain is Ni-sirohydrochlorin a,c-diamide reductive cyclase complex, component CfbD (352 aa).

Belongs to the NifD/NifK/NifE/NifN family. As to quaternary structure, homodimer or monomer. The Ni-sirohydrochlorin a,c-diamide reductive cyclase complex is composed of a NifH homolog component CfbC and a NifD homolog component CfbD. It depends on [4Fe-4S] cluster as a cofactor.

It carries out the reaction Ni-sirohydrochlorin a,c-diamide + 3 AH2 + ATP + H2O = 15,17(3)-seco-F430-17(3)-acid + 3 A + ADP + phosphate. Its function is as follows. Involved in the biosynthesis of the unique nickel-containing tetrapyrrole coenzyme F430, the prosthetic group of methyl-coenzyme M reductase (MCR), which plays a key role in methanogenesis and anaerobic methane oxidation. Catalyzes both the six-electron reduction of the tetrahydroporphyrin ring system and the gamma-lactamization of the c-acetamide side chain of Ni-sirohydrochlorin a,c-diamide to yield 15,17(3)-seco-F430-17(3)-acid (seco-F430), the last intermediate in the biosynthesis of the coenzyme F430. In Methanocaldococcus jannaschii (strain ATCC 43067 / DSM 2661 / JAL-1 / JCM 10045 / NBRC 100440) (Methanococcus jannaschii), this protein is Ni-sirohydrochlorin a,c-diamide reductive cyclase complex, component CfbD.